Consider the following 477-residue polypeptide: Cysteine--tRNA ligase (477 aa).

Cys29 is a Zn(2+) binding site. The 'HIGH' region signature appears at 31–41; it reads PTVQASPHIGH. Zn(2+) contacts are provided by Cys219, His244, and Glu248. The short motif at 275 to 279 is the 'KMSKS' region element; sequence KMSKS. Residue Lys278 coordinates ATP.

It belongs to the class-I aminoacyl-tRNA synthetase family. Monomer. It depends on Zn(2+) as a cofactor.

The protein resides in the cytoplasm. The enzyme catalyses tRNA(Cys) + L-cysteine + ATP = L-cysteinyl-tRNA(Cys) + AMP + diphosphate. This Leifsonia xyli subsp. xyli (strain CTCB07) protein is Cysteine--tRNA ligase.